We begin with the raw amino-acid sequence, 265 residues long: 3'(2'),5'-bisphosphate nucleotidase CysQ (265 aa).

5 residues coordinate Mg(2+): E80, D99, L101, D102, and D222. Residue E80 participates in substrate binding. Substrate is bound by residues 101–104 (LDGT) and D222.

It belongs to the inositol monophosphatase superfamily. CysQ family. Mg(2+) is required as a cofactor.

Its subcellular location is the cell inner membrane. It catalyses the reaction adenosine 3',5'-bisphosphate + H2O = AMP + phosphate. Functionally, converts adenosine-3',5'-bisphosphate (PAP) to AMP. The sequence is that of 3'(2'),5'-bisphosphate nucleotidase CysQ from Buchnera aphidicola subsp. Acyrthosiphon pisum (strain APS) (Acyrthosiphon pisum symbiotic bacterium).